The primary structure comprises 601 residues: A-type ATP synthase subunit A (601 aa).

Residue 236 to 243 (GPFGSGKT) participates in ATP binding.

It belongs to the ATPase alpha/beta chains family. Has multiple subunits with at least A(3), B(3), C, D, E, F, H, I and proteolipid K(x).

It localises to the cell membrane. The catalysed reaction is ATP + H2O + 4 H(+)(in) = ADP + phosphate + 5 H(+)(out). Component of the A-type ATP synthase that produces ATP from ADP in the presence of a proton gradient across the membrane. The A chain is the catalytic subunit. This Hyperthermus butylicus (strain DSM 5456 / JCM 9403 / PLM1-5) protein is A-type ATP synthase subunit A.